A 397-amino-acid chain; its full sequence is CCA-adding enzyme (397 aa).

2 residues coordinate ATP: G26 and R29. CTP contacts are provided by G26 and R29. Mg(2+)-binding residues include D39 and D41. 5 residues coordinate ATP: R110, D153, R156, R159, and R162. The CTP site is built by R110, D153, R156, R159, and R162.

Belongs to the tRNA nucleotidyltransferase/poly(A) polymerase family. Bacterial CCA-adding enzyme type 3 subfamily. Homodimer. The cofactor is Mg(2+).

The catalysed reaction is a tRNA precursor + 2 CTP + ATP = a tRNA with a 3' CCA end + 3 diphosphate. It catalyses the reaction a tRNA with a 3' CCA end + 2 CTP + ATP = a tRNA with a 3' CCACCA end + 3 diphosphate. Catalyzes the addition and repair of the essential 3'-terminal CCA sequence in tRNAs without using a nucleic acid template. Adds these three nucleotides in the order of C, C, and A to the tRNA nucleotide-73, using CTP and ATP as substrates and producing inorganic pyrophosphate. tRNA 3'-terminal CCA addition is required both for tRNA processing and repair. Also involved in tRNA surveillance by mediating tandem CCA addition to generate a CCACCA at the 3' terminus of unstable tRNAs. While stable tRNAs receive only 3'-terminal CCA, unstable tRNAs are marked with CCACCA and rapidly degraded. This chain is CCA-adding enzyme, found in Bacillus cereus (strain B4264).